The sequence spans 524 residues: PiggyBac transposable element-derived protein 5 (524 aa).

The segment at 30–117 (DDVFGESGPD…DTGGPTRKMP (88 aa)) is disordered. Over residues 47 to 59 (STSAASRSSSAAS) the composition is skewed to low complexity. Residues 67–79 (PGPPGAAPPPPRA) show a composition bias toward pro residues. A compositionally biased stretch (basic and acidic residues) spans 98 to 108 (LRDRPPPRFED). At Ser521 the chain carries Phosphoserine.

It is found in the nucleus. Transposase that mediates sequence-specific genomic rearrangements. Can induce genomic rearrangements that inactivate the HPRT1 gene. In Homo sapiens (Human), this protein is PiggyBac transposable element-derived protein 5 (PGBD5).